Reading from the N-terminus, the 152-residue chain is Small ribosomal subunit protein uS13 (152 aa).

The protein belongs to the universal ribosomal protein uS13 family. Part of the 30S ribosomal subunit. Forms a loose heterodimer with protein S19. Forms two bridges to the 50S subunit in the 70S ribosome.

Located at the top of the head of the 30S subunit, it contacts several helices of the 16S rRNA. In the 70S ribosome it contacts the 23S rRNA (bridge B1a) and protein L5 of the 50S subunit (bridge B1b), connecting the 2 subunits; these bridges are implicated in subunit movement. This chain is Small ribosomal subunit protein uS13, found in Pyrobaculum aerophilum (strain ATCC 51768 / DSM 7523 / JCM 9630 / CIP 104966 / NBRC 100827 / IM2).